Reading from the N-terminus, the 497-residue chain is COP9 signalosome complex subunit 3 (497 aa).

Positions Gln-233–Leu-408 constitute a PCI domain.

This sequence belongs to the CSN3 family. In terms of assembly, component of the COP9 signalosome (CSN) complex.

Its subcellular location is the cytoplasm. It is found in the nucleus. Component of the COP9 signalosome (CSN) complex that acts as an regulator of the ubiquitin (Ubl) conjugation pathway by mediating the deneddylation of the cullin subunit of SCF-type E3 ubiquitin-protein ligase complexes. The CSN complex is involved in the regulation of the circadian clock through its control of the stability of the SCF(FWD1) complex. The sequence is that of COP9 signalosome complex subunit 3 (csn-3) from Neurospora crassa (strain ATCC 24698 / 74-OR23-1A / CBS 708.71 / DSM 1257 / FGSC 987).